We begin with the raw amino-acid sequence, 116 residues long: Somatostatin (116 aa).

The signal sequence occupies residues 1–24 (MLSCRLQCALAALSIVLALGGVTG). Residues 25–88 (APSDPRLRQF…QDEMRLELQR (64 aa)) constitute a propeptide that is removed on maturation. Position 43 is an alanine amide (Ala43). Residues 62–99 (QTENDALEPEDLSQAAEQDEMRLELQRSANSNPAMAPR) form a disordered region. A disulfide bridge links Cys105 with Cys116.

This sequence belongs to the somatostatin family. Post-translationally, C-terminal amidation of the neuronostatin peptide is required for its biological activity, including for the regulation of mean arterial pressure. As to expression, expressed in the pancreas and the spleen (at protein level).

It localises to the secreted. Its function is as follows. Inhibits the secretion of pituitary hormones, including that of growth hormone/somatotropin (GH1), PRL, ACTH, luteinizing hormone (LH) and TSH. Also impairs ghrelin- and GnRH-stimulated secretion of GH1 and LH; the inhibition of ghrelin-stimulated secretion of GH1 can be further increased by neuronostatin. In terms of biological role, may enhance low-glucose-induced glucagon release by pancreatic alpha cells. This effect may be mediated by binding to GPR107 and PKA activation. May regulate cardiac contractile function. May compromise cardiomyocyte viability. In the central nervous system, may impair memory retention and may affect hippocampal excitability. May also have anxiolytic and anorexigenic effects. May play a role in arterial pressure regulation. May inhibit basal, but not ghrelin- or GnRH-stimulated secretion of GH1 or LH, but does not affect the release of other pituitary hormones, including PRL, ACTH, FSH or TSH. Potentiates inhibitory action of somatostatin on ghrelin-stimulated secretion of GH1, but not that on GnRH-stimulated secretion of LH. The protein is Somatostatin (SST) of Sus scrofa (Pig).